A 192-amino-acid chain; its full sequence is Peptidyl-tRNA hydrolase (192 aa).

His17 provides a ligand contact to tRNA. His22 acts as the Proton acceptor in catalysis. The tRNA site is built by Phe68, Asn70, and Asn116.

The protein belongs to the PTH family. In terms of assembly, monomer.

Its subcellular location is the cytoplasm. It catalyses the reaction an N-acyl-L-alpha-aminoacyl-tRNA + H2O = an N-acyl-L-amino acid + a tRNA + H(+). Hydrolyzes ribosome-free peptidyl-tRNAs (with 1 or more amino acids incorporated), which drop off the ribosome during protein synthesis, or as a result of ribosome stalling. Its function is as follows. Catalyzes the release of premature peptidyl moieties from peptidyl-tRNA molecules trapped in stalled 50S ribosomal subunits, and thus maintains levels of free tRNAs and 50S ribosomes. This chain is Peptidyl-tRNA hydrolase, found in Xylella fastidiosa (strain 9a5c).